Reading from the N-terminus, the 431-residue chain is Chaperone SurA (431 aa).

An N-terminal signal peptide occupies residues 1–20 (MKNWRTLILGLALSASTAFA). PpiC domains are found at residues 171–272 (NDEL…KVND) and 282–382 (VTET…QLLD).

The protein resides in the periplasm. The catalysed reaction is [protein]-peptidylproline (omega=180) = [protein]-peptidylproline (omega=0). In terms of biological role, chaperone involved in the correct folding and assembly of outer membrane proteins. Recognizes specific patterns of aromatic residues and the orientation of their side chains, which are found more frequently in integral outer membrane proteins. May act in both early periplasmic and late outer membrane-associated steps of protein maturation. The chain is Chaperone SurA from Pectobacterium atrosepticum (strain SCRI 1043 / ATCC BAA-672) (Erwinia carotovora subsp. atroseptica).